Reading from the N-terminus, the 428-residue chain is Adenylosuccinate synthetase (428 aa).

GTP-binding positions include 12–18 (GDEGKGK) and 40–42 (GHT). Residue Asp-13 is the Proton acceptor of the active site. Residues Asp-13 and Gly-40 each contribute to the Mg(2+) site. IMP contacts are provided by residues 13–16 (DEGK), 38–41 (NAGH), Thr-128, Arg-142, Gln-223, Thr-238, and Arg-302. His-41 acts as the Proton donor in catalysis. 298–304 (TTTGRPR) serves as a coordination point for substrate. Residues Arg-304, 330–332 (KLD), and 412–414 (GVG) each bind GTP.

The protein belongs to the adenylosuccinate synthetase family. In terms of assembly, homodimer. The cofactor is Mg(2+).

It is found in the cytoplasm. It carries out the reaction IMP + L-aspartate + GTP = N(6)-(1,2-dicarboxyethyl)-AMP + GDP + phosphate + 2 H(+). It functions in the pathway purine metabolism; AMP biosynthesis via de novo pathway; AMP from IMP: step 1/2. In terms of biological role, plays an important role in the de novo pathway of purine nucleotide biosynthesis. Catalyzes the first committed step in the biosynthesis of AMP from IMP. The polypeptide is Adenylosuccinate synthetase (Kineococcus radiotolerans (strain ATCC BAA-149 / DSM 14245 / SRS30216)).